A 72-amino-acid chain; its full sequence is ATP synthase subunit c (72 aa).

2 helical membrane-spanning segments follow: residues 5-25 (LLAAGIAVLAGIGAGIGIGIA) and 51-71 (AGLSEATAIYGLVVSIILLFV).

The protein belongs to the ATPase C chain family. As to quaternary structure, F-type ATPases have 2 components, F(1) - the catalytic core - and F(0) - the membrane proton channel. F(1) has five subunits: alpha(3), beta(3), gamma(1), delta(1), epsilon(1). F(0) has three main subunits: a(1), b(2) and c(10-14). The alpha and beta chains form an alternating ring which encloses part of the gamma chain. F(1) is attached to F(0) by a central stalk formed by the gamma and epsilon chains, while a peripheral stalk is formed by the delta and b chains.

It localises to the cell membrane. F(1)F(0) ATP synthase produces ATP from ADP in the presence of a proton or sodium gradient. F-type ATPases consist of two structural domains, F(1) containing the extramembraneous catalytic core and F(0) containing the membrane proton channel, linked together by a central stalk and a peripheral stalk. During catalysis, ATP synthesis in the catalytic domain of F(1) is coupled via a rotary mechanism of the central stalk subunits to proton translocation. Its function is as follows. Key component of the F(0) channel; it plays a direct role in translocation across the membrane. A homomeric c-ring of between 10-14 subunits forms the central stalk rotor element with the F(1) delta and epsilon subunits. The polypeptide is ATP synthase subunit c (Clostridium perfringens (strain ATCC 13124 / DSM 756 / JCM 1290 / NCIMB 6125 / NCTC 8237 / Type A)).